A 1161-amino-acid chain; its full sequence is DNA-directed RNA polymerase subunit beta (1161 aa).

It belongs to the RNA polymerase beta chain family. In terms of assembly, the RNAP catalytic core consists of 2 alpha, 1 beta, 1 beta' and 1 omega subunit. When a sigma factor is associated with the core the holoenzyme is formed, which can initiate transcription. The RNAP complex including the principal sigma factor HrdB also interacts with RNA-binding protein RbpA.

It catalyses the reaction RNA(n) + a ribonucleoside 5'-triphosphate = RNA(n+1) + diphosphate. Its function is as follows. DNA-dependent RNA polymerase catalyzes the transcription of DNA into RNA using the four ribonucleoside triphosphates as substrates. The sequence is that of DNA-directed RNA polymerase subunit beta from Streptomyces coelicolor (strain ATCC BAA-471 / A3(2) / M145).